Consider the following 619-residue polypeptide: Chaperone protein HscA homolog (619 aa).

The protein belongs to the heat shock protein 70 family.

Chaperone involved in the maturation of iron-sulfur cluster-containing proteins. Has a low intrinsic ATPase activity which is markedly stimulated by HscB. This chain is Chaperone protein HscA homolog, found in Acinetobacter baumannii (strain ACICU).